The primary structure comprises 502 residues: UTP--glucose-1-phosphate uridylyltransferase 2 (502 aa).

Positions 1-20 are disordered; the sequence is MMKPDLNSPLPQSPQLQAFG. Positions 9 to 20 are enriched in polar residues; the sequence is PLPQSPQLQAFG. UTP is bound by residues 114–117, Lys128, Gln191, and Gly220; that span reads LNGG. 116–117 contacts substrate; sequence GG. Substrate-binding positions include His221 and 249–251; that span reads NVD. The UTP site is built by Asp251 and Lys390.

Belongs to the UDPGP type 1 family.

The enzyme catalyses alpha-D-glucose 1-phosphate + UTP + H(+) = UDP-alpha-D-glucose + diphosphate. In terms of biological role, plays a central role as a glucosyl donor in cellular metabolic pathways. The sequence is that of UTP--glucose-1-phosphate uridylyltransferase 2 (ugpB) from Dictyostelium discoideum (Social amoeba).